The chain runs to 327 residues: Tetraacyldisaccharide 4'-kinase (327 aa).

52–59 (TLGGAGKT) provides a ligand contact to ATP.

Belongs to the LpxK family.

The catalysed reaction is a lipid A disaccharide + ATP = a lipid IVA + ADP + H(+). It participates in glycolipid biosynthesis; lipid IV(A) biosynthesis; lipid IV(A) from (3R)-3-hydroxytetradecanoyl-[acyl-carrier-protein] and UDP-N-acetyl-alpha-D-glucosamine: step 6/6. In terms of biological role, transfers the gamma-phosphate of ATP to the 4'-position of a tetraacyldisaccharide 1-phosphate intermediate (termed DS-1-P) to form tetraacyldisaccharide 1,4'-bis-phosphate (lipid IVA). The polypeptide is Tetraacyldisaccharide 4'-kinase (Methylorubrum extorquens (strain CM4 / NCIMB 13688) (Methylobacterium extorquens)).